A 123-amino-acid polypeptide reads, in one-letter code: UPF0102 protein CLM_2733 (123 aa).

Belongs to the UPF0102 family.

In Clostridium botulinum (strain Kyoto / Type A2), this protein is UPF0102 protein CLM_2733.